Here is a 236-residue protein sequence, read N- to C-terminus: Ribose-5-phosphate isomerase A (236 aa).

Substrate-binding positions include 31 to 34 (TGST), 84 to 87 (DGAD), and 97 to 100 (KGGG). The active-site Proton acceptor is the Glu-106. Lys-124 serves as a coordination point for substrate.

This sequence belongs to the ribose 5-phosphate isomerase family. As to quaternary structure, homodimer.

The catalysed reaction is aldehydo-D-ribose 5-phosphate = D-ribulose 5-phosphate. The protein operates within carbohydrate degradation; pentose phosphate pathway; D-ribose 5-phosphate from D-ribulose 5-phosphate (non-oxidative stage): step 1/1. Its function is as follows. Catalyzes the reversible conversion of ribose-5-phosphate to ribulose 5-phosphate. This is Ribose-5-phosphate isomerase A from Polynucleobacter asymbioticus (strain DSM 18221 / CIP 109841 / QLW-P1DMWA-1) (Polynucleobacter necessarius subsp. asymbioticus).